Consider the following 271-residue polypeptide: Mannosyl-3-phosphoglycerate phosphatase (271 aa).

Residue Asp13 is the Nucleophile of the active site. Mg(2+) is bound by residues Asp13, Asp15, and Asp214.

This sequence belongs to the HAD-like hydrolase superfamily. MPGP family. Mg(2+) serves as cofactor.

Its subcellular location is the cytoplasm. It catalyses the reaction 2-O-(alpha-D-mannosyl)-3-phosphoglycerate + H2O = (2R)-2-O-(alpha-D-mannosyl)-glycerate + phosphate. This is Mannosyl-3-phosphoglycerate phosphatase from Escherichia coli (strain 55989 / EAEC).